The chain runs to 234 residues: Adenosine 5'-phosphosulfate reductase (234 aa).

[4Fe-4S] cluster-binding residues include C120, C121, C203, and C206. C229 functions as the Nucleophile; cysteine thiosulfonate intermediate in the catalytic mechanism.

The protein belongs to the PAPS reductase family. CysH subfamily. Requires [4Fe-4S] cluster as cofactor.

It is found in the cytoplasm. It catalyses the reaction [thioredoxin]-disulfide + sulfite + AMP + 2 H(+) = adenosine 5'-phosphosulfate + [thioredoxin]-dithiol. It functions in the pathway sulfur metabolism; hydrogen sulfide biosynthesis; sulfite from sulfate. In terms of biological role, catalyzes the formation of sulfite from adenosine 5'-phosphosulfate (APS) using thioredoxin as an electron donor. The protein is Adenosine 5'-phosphosulfate reductase of Bacillus cereus (strain ZK / E33L).